A 243-amino-acid chain; its full sequence is MNAEKPPVAHNVDLEEIAKFEAVASRWWDTEGEFKPLHRINPLRLGYIAERAGGLFGKKVLDVGCGGGILSESMAREGANVTGLDMGAEPLAVARLHALESGVELNYVQQTVEEHAAQHAGAYDVVTCMEMLEHVPDPRSVVQACAQLVKPGGHVFFSTLNRNAKSWLMAVVGAEYVLRMVPKGTHDAKKFIRPSELLGWVDETPLEERHIIGLHYNPLTNRFKLAPGVDVNYMLHTQAKKPV.

Positions 44, 64, 85, and 129 each coordinate S-adenosyl-L-methionine.

The protein belongs to the methyltransferase superfamily. UbiG/COQ3 family.

The catalysed reaction is a 3-demethylubiquinol + S-adenosyl-L-methionine = a ubiquinol + S-adenosyl-L-homocysteine + H(+). It carries out the reaction a 3-(all-trans-polyprenyl)benzene-1,2-diol + S-adenosyl-L-methionine = a 2-methoxy-6-(all-trans-polyprenyl)phenol + S-adenosyl-L-homocysteine + H(+). The protein operates within cofactor biosynthesis; ubiquinone biosynthesis. In terms of biological role, O-methyltransferase that catalyzes the 2 O-methylation steps in the ubiquinone biosynthetic pathway. The protein is Ubiquinone biosynthesis O-methyltransferase of Cronobacter sakazakii (strain ATCC BAA-894) (Enterobacter sakazakii).